Consider the following 376-residue polypeptide: DNA methyltransferase CcrM (376 aa).

Residues 273–370 (KATLSVMTGK…IDELRSVIRN (98 aa)) form the RAMA domain.

This sequence belongs to the N(4)/N(6)-methyltransferase family.

It carries out the reaction a 2'-deoxyadenosine in DNA + S-adenosyl-L-methionine = an N(6)-methyl-2'-deoxyadenosine in DNA + S-adenosyl-L-homocysteine + H(+). In terms of biological role, a beta subtype methylase that recognizes the double-stranded sequence 5'-GANTC-3' and methylates A-2 on both strands. Overexpression leads to many branched and bloated cells, two to three times the size of wild-type cells, and cells that have 1-3 times the normal amount of DNA. Contributes to the accurate cell-cycle control of DNA replication and cellular morphology. Can fully replace its ortholog in C.crescentus. This chain is DNA methyltransferase CcrM (smeIM), found in Rhizobium meliloti (strain 1021) (Ensifer meliloti).